The primary structure comprises 557 residues: Polypyrimidine tract-binding protein 1 (557 aa).

M1 is subject to N-acetylmethionine. S16 is subject to Phosphoserine. 3 RRM domains span residues 59 to 143, 184 to 260, and 363 to 437; these read RVIH…SSPN, LRII…FSKL, and SVLL…LSKH. K65 is covalently cross-linked (Glycyl lysine isopeptide (Lys-Gly) (interchain with G-Cter in SUMO2)). A Phosphotyrosine modification is found at Y127. Residue T138 is modified to Phosphothreonine. S141 is modified (phosphoserine). K218 participates in a covalent cross-link: Glycyl lysine isopeptide (Lys-Gly) (interchain with G-Cter in SUMO2). Phosphoserine is present on S459. The RRM 4 domain occupies 480–555; it reads ATLHLSNIPP…HHLRVSFSKS (76 aa).

Monomer. Part of a ternary complex containing KHSRP, PTBP1, PTBP2 and HNRPH1. Interacts with RAVER1 and SFPQ. Interacts with IVNS1ABP (via BACK domain); the interaction is direct.

Its subcellular location is the nucleus. Plays a role in pre-mRNA splicing and in the regulation of alternative splicing events. Activates exon skipping of its own pre-mRNA during muscle cell differentiation. Binds to the polypyrimidine tract of introns. May promote RNA looping when bound to two separate polypyrimidine tracts in the same pre-mRNA. May promote the binding of U2 snRNP to pre-mRNA. Cooperates with RAVER1 to modulate switching between mutually exclusive exons during maturation of the TPM1 pre-mRNA. Represses the splicing of MAPT/Tau exon 10. Binds to polypyrimidine-rich controlling element (PCE) of CFTR and promotes exon skipping of CFTR exon 9, thereby antagonizing TIA1 and its role in exon inclusion of CFTR exon 9. Plays a role in the splicing of pyruvate kinase PKM by binding repressively to a polypyrimidine tract flanking PKM exon 9, inhibiting exon 9 inclusion and resulting in exon 10 inclusion and production of the PKM M2 isoform. In case of infection by picornaviruses, binds to the viral internal ribosome entry site (IRES) and stimulates the IRES-mediated translation. The polypeptide is Polypyrimidine tract-binding protein 1 (PTBP1) (Homo sapiens (Human)).